Consider the following 942-residue polypeptide: Cilia- and flagella-associated protein 69 (942 aa).

A compositionally biased stretch (low complexity) spans 1–16 (MSTAEASATTADAAEA). The disordered stretch occupies residues 1-25 (MSTAEASATTADAAEAGGRTKTGSP).

As to expression, expressed in ciliated olfactory sensory neurons (at protein level). Expressed in testis, specifically in sperm (at protein level).

Its subcellular location is the cell projection. The protein resides in the cilium. It localises to the flagellum. Its function is as follows. Cilium- and flagellum-associated protein. In the olfactory epithelium, regulates the speed of activation and termination of the odor response and thus contributes to the robustness of olfactory transduction pathways. Required for sperm flagellum assembly and stability. This chain is Cilia- and flagella-associated protein 69, found in Mus musculus (Mouse).